Reading from the N-terminus, the 355-residue chain is Aurora kinase (355 aa).

The region spanning 89-340 is the Protein kinase domain; sequence FEIGKPLGKG…LEQVMRHPWI (252 aa). Residues 95-103 and Lys-118 contribute to the ATP site; that span reads LGKGKFGRV. Asp-212 serves as the catalytic Proton acceptor.

This sequence belongs to the protein kinase superfamily. Ser/Thr protein kinase family. Aurora subfamily. In terms of assembly, component of the CPC complex at least composed of ark1, bir1 and pic1. Interacts with the mitotic checkpoint complex (MCC) subunit mad3.

The protein localises to the nucleus. It is found in the cytoplasm. It localises to the cytoskeleton. Its subcellular location is the spindle. It carries out the reaction L-seryl-[protein] + ATP = O-phospho-L-seryl-[protein] + ADP + H(+). The catalysed reaction is L-threonyl-[protein] + ATP = O-phospho-L-threonyl-[protein] + ADP + H(+). In terms of biological role, component of the chromosomal passenger complex (CPC), a complex that acts as a key regulator of chromosome segregation and cytokinesis. Has a role in error-correction of aberrent kinetochore-microtubule attachments to ensure that sister kinetochores become bioriented and connect to opposite poles by promoting spindle assembly checkpoint signaling. Ark1 is also required for phosphorylation of histone H3 that accompanies chromosome condensation and condensin recruitment to mitotic chromatin. The sequence is that of Aurora kinase (ark1) from Schizosaccharomyces pombe (strain 972 / ATCC 24843) (Fission yeast).